A 120-amino-acid polypeptide reads, in one-letter code: FK506-binding protein 1B (120 aa).

Residues 1–26 (MGLEKQTLRMGNGKDHPQPGDPVELN) form a disordered region. A PPIase FKBP-type domain is found at 20–115 (GDPVELNYTG…VFEVELLKIK (96 aa)).

The protein belongs to the FKBP-type PPIase family. FKBP1 subfamily.

The catalysed reaction is [protein]-peptidylproline (omega=180) = [protein]-peptidylproline (omega=0). With respect to regulation, inhibited by both FK506 and rapamycin. Its function is as follows. PPIases accelerate the folding of proteins. It catalyzes the cis-trans isomerization of proline imidic peptide bonds in oligopeptides. This is FK506-binding protein 1B (fpr1B) from Aspergillus fumigatus (strain ATCC MYA-4609 / CBS 101355 / FGSC A1100 / Af293) (Neosartorya fumigata).